Reading from the N-terminus, the 361-residue chain is Chorismate synthase (361 aa).

NADP(+) is bound by residues arginine 48 and arginine 54. Residues 125–127 (RSS), 238–239 (NA), glycine 278, 293–297 (KPTSS), and arginine 319 contribute to the FMN site.

Belongs to the chorismate synthase family. As to quaternary structure, homotetramer. The cofactor is FMNH2.

It carries out the reaction 5-O-(1-carboxyvinyl)-3-phosphoshikimate = chorismate + phosphate. It functions in the pathway metabolic intermediate biosynthesis; chorismate biosynthesis; chorismate from D-erythrose 4-phosphate and phosphoenolpyruvate: step 7/7. Catalyzes the anti-1,4-elimination of the C-3 phosphate and the C-6 proR hydrogen from 5-enolpyruvylshikimate-3-phosphate (EPSP) to yield chorismate, which is the branch point compound that serves as the starting substrate for the three terminal pathways of aromatic amino acid biosynthesis. This reaction introduces a second double bond into the aromatic ring system. The chain is Chorismate synthase from Escherichia coli O1:K1 / APEC.